Reading from the N-terminus, the 390-residue chain is Chorismate synthase 2 (390 aa).

The NADP(+) site is built by arginine 39 and arginine 45. Residues 132 to 134 (RSS), 253 to 254 (NA), glycine 298, 313 to 317 (KPIPT), and arginine 339 each bind FMN.

This sequence belongs to the chorismate synthase family. Homotetramer. It depends on FMNH2 as a cofactor.

The catalysed reaction is 5-O-(1-carboxyvinyl)-3-phosphoshikimate = chorismate + phosphate. It participates in metabolic intermediate biosynthesis; chorismate biosynthesis; chorismate from D-erythrose 4-phosphate and phosphoenolpyruvate: step 7/7. Catalyzes the anti-1,4-elimination of the C-3 phosphate and the C-6 proR hydrogen from 5-enolpyruvylshikimate-3-phosphate (EPSP) to yield chorismate, which is the branch point compound that serves as the starting substrate for the three terminal pathways of aromatic amino acid biosynthesis. This reaction introduces a second double bond into the aromatic ring system. The polypeptide is Chorismate synthase 2 (Bacillus cereus (strain ATCC 14579 / DSM 31 / CCUG 7414 / JCM 2152 / NBRC 15305 / NCIMB 9373 / NCTC 2599 / NRRL B-3711)).